An 84-amino-acid chain; its full sequence is Putative membrane protein insertion efficiency factor (84 aa).

A disordered region spans residues 63-84 (WGGSGYDPVPGADPEHDRRPRG). Basic and acidic residues predominate over residues 75–84 (DPEHDRRPRG).

The protein belongs to the UPF0161 family.

The protein resides in the cell inner membrane. Could be involved in insertion of integral membrane proteins into the membrane. The sequence is that of Putative membrane protein insertion efficiency factor from Cereibacter sphaeroides (strain ATCC 17029 / ATH 2.4.9) (Rhodobacter sphaeroides).